Consider the following 348-residue polypeptide: [FeFe] hydrogenase maturase subunit HydE (348 aa).

A Radical SAM core domain is found at 49 to 268 (DEVHIRAIIE…LLPDSNIPAT (220 aa)). 3 residues coordinate [4Fe-4S] cluster: cysteine 63, cysteine 67, and cysteine 70. [2Fe-2S] cluster is bound by residues cysteine 311, cysteine 319, and cysteine 322.

The protein belongs to the radical SAM superfamily. HydE family. As to quaternary structure, monomer. Requires [4Fe-4S] cluster as cofactor. [2Fe-2S] cluster serves as cofactor.

Functionally, required for the maturation of the [FeFe]-hydrogenase HydA. Catalyzes the reductive cleavage of S-adenosyl-L-methionine (in vitro), suggesting it may contribute to the biosynthesis of an essential sulfur-containing ligand that binds to the hydrogenase active site [2Fe-2S] cluster. The protein is [FeFe] hydrogenase maturase subunit HydE of Thermotoga maritima (strain ATCC 43589 / DSM 3109 / JCM 10099 / NBRC 100826 / MSB8).